The primary structure comprises 136 residues: Large ribosomal subunit protein uL16 (136 aa).

It belongs to the universal ribosomal protein uL16 family. Part of the 50S ribosomal subunit.

Binds 23S rRNA and is also seen to make contacts with the A and possibly P site tRNAs. The chain is Large ribosomal subunit protein uL16 from Yersinia enterocolitica serotype O:8 / biotype 1B (strain NCTC 13174 / 8081).